Reading from the N-terminus, the 1874-residue chain is Protein TIC 214 (1874 aa).

A run of 6 helical transmembrane segments spans residues 18-38 (IINS…FSIG), 64-84 (FITG…HLAL), 87-107 (PHTI…WNNH), 124-144 (LSIQ…YFIL), 172-192 (VGWL…LVWI), and 221-241 (IFSI…PSPI). Disordered regions lie at residues 248–310 (ETSK…EIRV) and 1567–1624 (KTEC…NEED). Residues 255–268 (GVESEEEGDVEIET) show a composition bias toward acidic residues. Composition is skewed to basic and acidic residues over residues 298-310 (DSNK…EIRV) and 1584-1601 (NQKE…RSDA).

Belongs to the TIC214 family. Part of the Tic complex.

Its subcellular location is the plastid. The protein localises to the chloroplast inner membrane. Involved in protein precursor import into chloroplasts. May be part of an intermediate translocation complex acting as a protein-conducting channel at the inner envelope. The polypeptide is Protein TIC 214 (Coffea arabica (Arabian coffee)).